A 999-amino-acid chain; its full sequence is Probable hemoglobin and hemoglobin-haptoglobin-binding protein 4 (999 aa).

Positions 1 to 24 are cleaved as a signal peptide; the sequence is MTNFRLNVLAYSVMLGLTASVAYA. The disordered stretch occupies residues 25–52; that stretch reads EPTNQPTNQPTNQPTNQPTNQPTNQNSN. Tandem repeats lie at residues 26 to 29, 30 to 33, 34 to 37, 38 to 41, 42 to 45, and 46 to 49. Residues 26-49 form a 6 X 4 AA tandem repeats of P-T-N-Q region; the sequence is PTNQPTNQPTNQPTNQPTNQPTNQ. Over residues 26–50 the composition is skewed to low complexity; it reads PTNQPTNQPTNQPTNQPTNQPTNQN. Residues 58–65 carry the TonB box motif; the sequence is EQINVLGS. One can recognise a TBDR plug domain in the interval 68–195; sequence NNDNTPPKIA…LGGAVLFETK (128 aa). The TBDR beta-barrel domain occupies 203-999; it reads EKDWHIGYKA…NYKLSAEITF (797 aa). The TonB C-terminal box signature appears at 982–999; sequence NRFYSPGRNYKLSAEITF.

Belongs to the TonB-dependent receptor family. Hemoglobin/haptoglobin binding protein subfamily.

Its subcellular location is the cell outer membrane. Acts as a receptor for hemoglobin or the hemoglobin/haptoglobin complex of the human host and is required for heme uptake. The polypeptide is Probable hemoglobin and hemoglobin-haptoglobin-binding protein 4 (Haemophilus influenzae (strain ATCC 51907 / DSM 11121 / KW20 / Rd)).